We begin with the raw amino-acid sequence, 274 residues long: NH(3)-dependent NAD(+) synthetase (274 aa).

46–53 (GISGGQDS) contributes to the ATP binding site. A Mg(2+)-binding site is contributed by Asp52. Residue Arg140 participates in deamido-NAD(+) binding. Residue Thr160 participates in ATP binding. Residue Glu165 participates in Mg(2+) binding. Residues Lys173 and Asp180 each contribute to the deamido-NAD(+) site. Positions 189 and 211 each coordinate ATP. 260 to 261 (HK) contacts deamido-NAD(+).

It belongs to the NAD synthetase family. In terms of assembly, homodimer.

It carries out the reaction deamido-NAD(+) + NH4(+) + ATP = AMP + diphosphate + NAD(+) + H(+). It functions in the pathway cofactor biosynthesis; NAD(+) biosynthesis; NAD(+) from deamido-NAD(+) (ammonia route): step 1/1. In terms of biological role, catalyzes the ATP-dependent amidation of deamido-NAD to form NAD. Uses ammonia as a nitrogen source. In Nocardia farcinica (strain IFM 10152), this protein is NH(3)-dependent NAD(+) synthetase.